The sequence spans 275 residues: Exosome complex component RRP40 (275 aa).

Ala-2 is subject to N-acetylalanine. Lys-151 is covalently cross-linked (Glycyl lysine isopeptide (Lys-Gly) (interchain with G-Cter in SUMO2)).

It belongs to the RRP40 family. Component of the RNA exosome core complex (Exo-9), composed of EXOSC1, EXOSC2, EXOSC3, EXOSC4, EXOSC5, EXOSC6, EXOSC7, EXOSC8 and EXOSC9; within the complex interacts with EXOSC5 and EXOSC9. The catalytically inactive RNA exosome core complex (Exo-9) associates with the catalytic subunit EXOSC10/RRP6. Exo-9 may associate with DIS3 to form the nucleolar exosome complex, or DIS3L to form the cytoplasmic exosome complex. Exo-9 is formed by a hexameric base ring consisting of the heterodimers EXOSC4-EXOSC9, EXOSC5-EXOSC8 and EXOSC6-EXOSC7, and a cap ring consisting of EXOSC1, EXOSC2 and EXOSC3. The RNA exosome complex associates with cofactors C1D/RRP47, MPHOSPH6/MPP6 and MTREX/MTR4. Interacts with MPHOSPH6/MPP6; the interaction is direct. Interacts with GTPBP1. Interacts with ZC3HAV1. Interacts with DDX17 only in the presence of ZC3HAV1 in an RNA-independent manner. Interacts with DHX36; this interaction occurs in a RNase-insensitive manner. Interacts with HBS1L isoform 2.

The protein resides in the cytoplasm. Its subcellular location is the nucleus. It localises to the nucleolus. In terms of biological role, non-catalytic component of the RNA exosome complex which has 3'-&gt;5' exoribonuclease activity and participates in a multitude of cellular RNA processing and degradation events. In the nucleus, the RNA exosome complex is involved in proper maturation of stable RNA species such as rRNA, snRNA and snoRNA, in the elimination of RNA processing by-products and non-coding 'pervasive' transcripts, such as antisense RNA species and promoter-upstream transcripts (PROMPTs), and of mRNAs with processing defects, thereby limiting or excluding their export to the cytoplasm. The RNA exosome may be involved in Ig class switch recombination (CSR) and/or Ig variable region somatic hypermutation (SHM) by targeting AICDA deamination activity to transcribed dsDNA substrates. In the cytoplasm, the RNA exosome complex is involved in general mRNA turnover and specifically degrades inherently unstable mRNAs containing AU-rich elements (AREs) within their 3' untranslated regions, and in RNA surveillance pathways, preventing translation of aberrant mRNAs. It seems to be involved in degradation of histone mRNA. The catalytic inactive RNA exosome core complex of 9 subunits (Exo-9) is proposed to play a pivotal role in the binding and presentation of RNA for ribonucleolysis, and to serve as a scaffold for the association with catalytic subunits and accessory proteins or complexes. EXOSC3 as peripheral part of the Exo-9 complex stabilizes the hexameric ring of RNase PH-domain subunits through contacts with EXOSC9 and EXOSC5. The chain is Exosome complex component RRP40 (EXOSC3) from Bos taurus (Bovine).